Here is a 422-residue protein sequence, read N- to C-terminus: Vitellogenin-2 (422 aa).

Residues 1–20 (MNPLTIFCLVAVLLSAATAH) form the signal peptide. Disordered stretches follow at residues 161-191 (QGEQGDDSNQDTSSSEESSNRPNGQQPKPNG) and 399-422 (FGKSAPAQKQNSYHGIHQGAGRPN). Positions 180–189 (NRPNGQQPKP) are enriched in polar residues.

The protein belongs to the AB hydrolase superfamily. Lipase family. As to expression, synthesized in the fat body and ovarian follicle cells and accumulate in the oocyte.

Its subcellular location is the secreted. In terms of biological role, vitellogenin is the major yolk protein of eggs where it is used as a food source during embryogenesis. This is Vitellogenin-2 (VG2-delta) from Ceratitis capitata (Mediterranean fruit fly).